A 764-amino-acid polypeptide reads, in one-letter code: Probable 5-methyltetrahydropteroyltriglutamate--homocysteine methyltransferase (764 aa).

2 residues coordinate 5-methyltetrahydropteroyltri-L-glutamate: Lys19 and Asn126. Residue Ser182 is modified to Phosphoserine. Position 441 is a phosphothreonine (Thr441). L-homocysteine is bound by residues 442–444 and Glu495; that span reads IGS. L-methionine is bound by residues 442-444 and Glu495; that span reads IGS. Residues Asp500, Tyr523, 526–527, and Trp572 each bind 5-methyltetrahydropteroyltri-L-glutamate; that span reads RC. Asp610 serves as a coordination point for L-homocysteine. Asp610 contacts L-methionine. His652, Cys654, and Glu676 together coordinate Zn(2+). His703 serves as the catalytic Proton donor. Cys735 is a Zn(2+) binding site.

Belongs to the vitamin-B12 independent methionine synthase family. The cofactor is Zn(2+).

It is found in the nucleus. Its subcellular location is the cytoplasm. It catalyses the reaction 5-methyltetrahydropteroyltri-L-glutamate + L-homocysteine = tetrahydropteroyltri-L-glutamate + L-methionine. It participates in amino-acid biosynthesis; L-methionine biosynthesis via de novo pathway; L-methionine from L-homocysteine (MetE route): step 1/1. In terms of biological role, catalyzes the transfer of a methyl group from 5-methyltetrahydrofolate to homocysteine resulting in methionine formation. The polypeptide is Probable 5-methyltetrahydropteroyltriglutamate--homocysteine methyltransferase (met26) (Schizosaccharomyces pombe (strain 972 / ATCC 24843) (Fission yeast)).